Consider the following 313-residue polypeptide: Pyrimidine-specific ribonucleoside hydrolase RihA (313 aa).

H240 is an active-site residue.

The protein belongs to the IUNH family. RihA subfamily.

Functionally, hydrolyzes cytidine or uridine to ribose and cytosine or uracil, respectively. This is Pyrimidine-specific ribonucleoside hydrolase RihA from Enterobacter sp. (strain 638).